The sequence spans 254 residues: RNA polymerase sigma-D factor (254 aa).

Positions aspartate 54–leucine 67 match the Polymerase core binding motif. The H-T-H motif DNA-binding region spans leucine 220–serine 239.

In terms of assembly, monomer. Interacts transiently with the RNAP core.

Its function is as follows. Sigma factors are initiation factors that promote the attachment of RNA polymerase (RNAP) to specific initiation sites and are then released. This alternative sigma factor is required for the transcription of the flagellin and motility genes as well as for wild-type chemotaxis. Associates with the RNAP core during all growth phases with a peak at the transition to stationary phase. The polypeptide is RNA polymerase sigma-D factor (sigD) (Bacillus subtilis (strain 168)).